Reading from the N-terminus, the 292-residue chain is Peroxisomal 2,4-dienoyl-CoA reductase [(3E)-enoyl-CoA-producing] (292 aa).

Residues 35–40 (GGGSGI), 60–64 (RSLPR), and aspartate 86 each bind NADP(+). Substrate is bound at residue arginine 60. Substrate-binding positions include arginine 88, phenylalanine 118, and 126 to 128 (SFN). At lysine 151 the chain carries N6-acetyllysine. NADP(+) contacts are provided by residues lysine 182 and 208 to 214 (PGAISGT). Arginine 219 lines the substrate pocket. Residue serine 287 is modified to Phosphoserine. The Microbody targeting signal motif lies at 290 to 292 (AKL). Position 291 is an N6-acetyllysine (lysine 291).

It belongs to the short-chain dehydrogenases/reductases (SDR) family. 2,4-dienoyl-CoA reductase subfamily. In terms of assembly, monomer, dimer and oligomer.

The protein resides in the peroxisome. It catalyses the reaction a (2E,4Z)-dienoyl-CoA + NADPH + H(+) = a 4,5-saturated-(3E)-enoyl-CoA + NADP(+). The enzyme catalyses a (2E,4E)-dienoyl-CoA + NADPH + H(+) = a 4,5-saturated-(3E)-enoyl-CoA + NADP(+). The catalysed reaction is (2E,4E)-hexadienoyl-CoA + NADPH + H(+) = (3E)-hexenoyl-CoA + NADP(+). It carries out the reaction (2E,4E)-decadienoyl-CoA + NADPH + H(+) = (3E)-decenoyl-CoA + NADP(+). It catalyses the reaction (2E,4Z,7Z,10Z,13Z,16Z,19Z)-docosaheptaenoyl-CoA + NADPH + H(+) = (3E,7Z,10Z,13Z,16Z,19Z)-docosahexaenoyl-CoA + NADP(+). Auxiliary enzyme of beta-oxidation. Participates in the degradation of unsaturated fatty enoyl-CoA esters having double bonds in both even- and odd-numbered positions in peroxisome. Catalyzes the NADP-dependent reduction of 2,4-dienoyl-CoA to yield trans-3-enoyl-CoA. Has activity towards short and medium chain 2,4-dienoyl-CoAs, but also towards 2,4,7,10,13,16,19-docosaheptaenoyl-CoA, suggesting that it does not constitute a rate limiting step in the peroxisomal degradation of docosahexaenoic acid. The polypeptide is Peroxisomal 2,4-dienoyl-CoA reductase [(3E)-enoyl-CoA-producing] (Decr2) (Rattus norvegicus (Rat)).